Here is a 598-residue protein sequence, read N- to C-terminus: MKNIRNFSIIAHIDHGKSTLSDRLIQSCGGLSDREMEAQVLDSMDLERERGITIKAQSVTLNYRAKDGETYQLNFIDTPGHVDFSYEVSRSLAACEGALLVVDAGQGVEAQTLANCYTAIEMDLEVVPILNKIDLPAAEPERVAEEIEDIVGIDAIDAVRCSAKTGVGIEDVLEEIVRKIPAPEGDPNAPLQALIIDSWFDNYLGVVSLVRVKNGILRKGDKIKVMSTGQSYNVDRLGIFTPKQVDTTELKTGEVGWLVCAIKDILGAPVGDTLTSHHNPATSVLPGFKKVKPQVYAGLFPISSDDYESFRDALGKLSLNDASLFYEPENSTALGFGFRCGFLGLLHMEIIQERLEREYDLDLITTAPTVVYEVEQTNGEVIYVDSPAKLPPLNNIAEIREPIAECNMLLPQSYLGNVITLCVEKRGVQTNMVYHGNQVALTYEIPMGEVVLDFFDRLKSTSRGYASLDYGFKRFQAADMVRVDIMINGERVDALALIVHKDNAQYRGRELVEKMRELIPRQQFDIAIQAAIGNHIIARSTVKQLRKNVLAKCYGGDVSRKKKLLQKQKEGKKRMKSLGNVEVPQEAFLAILHVGKDK.

Positions 2–184 constitute a tr-type G domain; that stretch reads KNIRNFSIIA…EIVRKIPAPE (183 aa). Residues 14-19 and 131-134 each bind GTP; these read DHGKST and NKID.

It belongs to the TRAFAC class translation factor GTPase superfamily. Classic translation factor GTPase family. LepA subfamily.

It localises to the cell inner membrane. It catalyses the reaction GTP + H2O = GDP + phosphate + H(+). Functionally, required for accurate and efficient protein synthesis under certain stress conditions. May act as a fidelity factor of the translation reaction, by catalyzing a one-codon backward translocation of tRNAs on improperly translocated ribosomes. Back-translocation proceeds from a post-translocation (POST) complex to a pre-translocation (PRE) complex, thus giving elongation factor G a second chance to translocate the tRNAs correctly. Binds to ribosomes in a GTP-dependent manner. This Histophilus somni (strain 2336) (Haemophilus somnus) protein is Elongation factor 4.